The following is a 1322-amino-acid chain: Myosin-1 (1322 aa).

A Myosin motor domain is found at 42–728 (AGVSDMTLLT…TLFALETMRD (687 aa)). Position 135–142 (135–142 (GESGAGKT)) interacts with ATP. Serine 369 is subject to Phosphoserine. The tract at residues 417–499 (VIGVLDIYGF…PGIFSALNDA (83 aa)) is actin-binding. IQ domains are found at residues 732-752 (HNMAMRIQRAWRAFMRRREES) and 753-778 (ARRIQRAWRRSREGHEFLELREYGHQ). In terms of domain architecture, TH1 spans 786–980 (RRRFSLISMR…SGEPPTSVSR (195 aa)). Disordered stretches follow at residues 966–1090 (IVSV…MPSY) and 1137–1162 (VQQLGSSSTAQTRSVPAPPSASATPA). 2 stretches are compositionally biased toward low complexity: residues 1000-1017 (SRPVTSRRPVPTVLPTTT) and 1027-1056 (GGTASASALAVPTTSTVAPASSASGNASGA). Polar residues-rich tracts occupy residues 1078–1087 (PATSAPSSGM) and 1137–1148 (VQQLGSSSTAQT). The region spanning 1184 to 1243 (RRLPRYRALYDFETQEAGELPLRTGDIVELEEKEENGWWLVKKGSTEGWSPADYLELIAE) is the SH3 domain. Positions 1246 to 1300 (AAKPRPPPPAKPASAKPAAAPARVSQSSVTSSWTPPDSHAAPVAVMPGMGDPGGF) are disordered. Positions 1257–1267 (PASAKPAAAPA) are enriched in low complexity. Positions 1269-1280 (VSQSSVTSSWTP) are enriched in polar residues.

Belongs to the TRAFAC class myosin-kinesin ATPase superfamily. Myosin family. Post-translationally, phosphorylation of the TEDS site (Ser-369) is required for the polarization of the actin cytoskeleton. Phosphorylation probably activates the myosin-I ATPase activity.

The protein resides in the cytoplasm. The protein localises to the cytoskeleton. It localises to the actin patch. Its function is as follows. Type-I myosin implicated in the organization of the actin cytoskeleton. Required for proper actin cytoskeleton polarization. At the cell cortex, assembles in patch-like structures together with proteins from the actin-polymerizing machinery and promotes actin assembly. Functions as actin nucleation-promoting factor (NPF) for the Arp2/3 complex. The chain is Myosin-1 (MYO1) from Malassezia globosa (strain ATCC MYA-4612 / CBS 7966) (Dandruff-associated fungus).